Consider the following 261-residue polypeptide: MATTTCQVVGLLLSLLGLAGCIAATGMDMWSTQDLYDNPVTSVFQYEGLWRSCVQQSSGFTECRPYFTILGLPAMLQAVRALMIVGIVLGVIGILVSIFALKCIRIGSMDDSAKAKMTLTSGIMFIISGVCAIIGVSVFANMLVTNFWMSTANMYSGMGGMVQTVQTRYTFGAALFVGWIAGGLTLIGGVMMCIACRGLTPDDRNFKAVSYHASGQNVAYKPGGFKASTGFGSNARNKKIYDGGARTEDDEQSHPTKYDYV.

The Cytoplasmic portion of the chain corresponds to 1–6 (MATTTC). A helical membrane pass occupies residues 7-27 (QVVGLLLSLLGLAGCIAATGM). Residues 28 to 80 (DMWSTQDLYDNPVTSVFQYEGLWRSCVQQSSGFTECRPYFTILGLPAMLQAVR) lie on the Extracellular side of the membrane. The chain crosses the membrane as a helical span at residues 81–101 (ALMIVGIVLGVIGILVSIFAL). At 102 to 122 (KCIRIGSMDDSAKAKMTLTSG) the chain is on the cytoplasmic side. Residues 123–143 (IMFIISGVCAIIGVSVFANML) form a helical membrane-spanning segment. At 144-173 (VTNFWMSTANMYSGMGGMVQTVQTRYTFGA) the chain is on the extracellular side. The chain crosses the membrane as a helical span at residues 174–194 (ALFVGWIAGGLTLIGGVMMCI). Over 195–261 (ACRGLTPDDR…QSHPTKYDYV (67 aa)) the chain is Cytoplasmic. The required for role in regulation of RANKL-induced osteoclast differentiation stretch occupies residues 195-261 (ACRGLTPDDR…QSHPTKYDYV (67 aa)). S214 is subject to Phosphoserine. The interval 242–261 (DGGARTEDDEQSHPTKYDYV) is disordered.

It belongs to the claudin family. As to quaternary structure, interacts with TJP2/ZO-2. Interacts with TJP1/ZO-1. Interacts with YAP1 (phosphorylated); the interaction sequesters YAP1 away from the nucleus and thereby restricts transcription of YAP1 target genes. Interacts with CLDN19. Expressed in the lung (at protein level).

The protein resides in the cell junction. Its subcellular location is the tight junction. The protein localises to the cell membrane. In terms of biological role, involved in alveolar fluid homeostasis via regulation of alveolar epithelial tight junction composition and therefore ion transport and solute permeability, potentially via downstream regulation of the actin cytoskeleton organization and beta-2-adrenergic signaling. Required for lung alveolarization and maintenance of the paracellular alveolar epithelial barrier. Acts to maintain epithelial progenitor cell proliferation and organ size, via regulation of YAP1 localization away from the nucleus and thereby restriction of YAP1 target gene transcription. Acts as a negative regulator of RANKL-induced osteoclast differentiation, potentially via relocation of TJP2/ZO-2 away from the nucleus, subsequently involved in bone resorption in response to calcium deficiency. Mediates the osteoprotective effects of estrogen, potentially via acting downstream of estrogen signaling independently of RANKL signaling pathways. Its function is as follows. Required for the formation of the gastric paracellular barrier via its role in tight junction formation, thereby involved in the response to gastric acidification. The protein is Claudin-18 of Rattus norvegicus (Rat).